Consider the following 211-residue polypeptide: Probable septum site-determining protein MinC (211 aa).

The protein belongs to the MinC family. As to quaternary structure, interacts with MinD and FtsZ.

In terms of biological role, cell division inhibitor that blocks the formation of polar Z ring septums. Rapidly oscillates between the poles of the cell to destabilize FtsZ filaments that have formed before they mature into polar Z rings. Prevents FtsZ polymerization. This Clostridium perfringens (strain 13 / Type A) protein is Probable septum site-determining protein MinC.